The primary structure comprises 149 residues: Transthyretin (149 aa).

The N-terminal stretch at Met-1 to Thr-20 is a signal peptide. Sulfocysteine is present on Cys-32. Lys-37 is an L-thyroxine binding site. Glu-64 is modified (4-carboxyglutamate). L-thyroxine is bound by residues Glu-76 and Ser-139.

This sequence belongs to the transthyretin family. Homotetramer. Dimer of dimers. In the homotetramer, subunits assemble around a central channel that can accommodate two ligand molecules. Interacts with RBP4. Post-translationally, sulfonation of the reactive cysteine Cys-32 enhances the stability of the native conformation of TTR, avoiding misassembly of the protein leading to amyloid formation.

Its subcellular location is the secreted. In terms of biological role, thyroid hormone-binding protein. Probably transports thyroxine from the bloodstream to the brain. The protein is Transthyretin (TTR) of Notamacropus eugenii (Tammar wallaby).